Reading from the N-terminus, the 427-residue chain is Protein TolB homolog (427 aa).

An N-terminal signal peptide occupies residues 1-20 (MLRRIFVSTFLVFGIVSLYA).

This sequence belongs to the TolB family.

The protein localises to the periplasm. The polypeptide is Protein TolB homolog (Chlamydia caviae (strain ATCC VR-813 / DSM 19441 / 03DC25 / GPIC) (Chlamydophila caviae)).